A 147-amino-acid chain; its full sequence is MVQATLRLESQWPASPAFGWALAPLEVSVLLSDDEAVQALNAQYRGKDKPTNILSFAMEEEADDAMPMPIMAGEPRLLGDLILAYQTVQREAAEQDKPFDQHLTHLLVHGTLHLLGYDHERSEDEAQQQEAREIAILAQLGLPNPYL.

3 residues coordinate Zn(2+): His109, His113, and His119.

This sequence belongs to the endoribonuclease YbeY family. Zn(2+) is required as a cofactor.

Its subcellular location is the cytoplasm. Functionally, single strand-specific metallo-endoribonuclease involved in late-stage 70S ribosome quality control and in maturation of the 3' terminus of the 16S rRNA. This chain is Endoribonuclease YbeY, found in Magnetococcus marinus (strain ATCC BAA-1437 / JCM 17883 / MC-1).